The primary structure comprises 260 residues: Thiazole synthase (260 aa).

Catalysis depends on K96, which acts as the Schiff-base intermediate with DXP. 1-deoxy-D-xylulose 5-phosphate-binding positions include G157, 184 to 185 (AG), and 206 to 207 (NT).

This sequence belongs to the ThiG family. Homotetramer. Forms heterodimers with either ThiH or ThiS.

It localises to the cytoplasm. It catalyses the reaction [ThiS sulfur-carrier protein]-C-terminal-Gly-aminoethanethioate + 2-iminoacetate + 1-deoxy-D-xylulose 5-phosphate = [ThiS sulfur-carrier protein]-C-terminal Gly-Gly + 2-[(2R,5Z)-2-carboxy-4-methylthiazol-5(2H)-ylidene]ethyl phosphate + 2 H2O + H(+). The protein operates within cofactor biosynthesis; thiamine diphosphate biosynthesis. Its function is as follows. Catalyzes the rearrangement of 1-deoxy-D-xylulose 5-phosphate (DXP) to produce the thiazole phosphate moiety of thiamine. Sulfur is provided by the thiocarboxylate moiety of the carrier protein ThiS. In vitro, sulfur can be provided by H(2)S. This Rhodopseudomonas palustris (strain HaA2) protein is Thiazole synthase.